A 595-amino-acid chain; its full sequence is DNA primase (595 aa).

The CHC2-type zinc-finger motif lies at 38-62 (CPFHQEKTPSFTVSDSKRFFYCFGC). Positions 250–332 (NHSILVEGYF…EKKISFIRLP (83 aa)) constitute a Toprim domain. Mg(2+) is bound by residues Glu-256, Asp-300, and Asp-302.

Belongs to the DnaG primase family. In terms of assembly, monomer. Interacts with DnaB. It depends on Zn(2+) as a cofactor. Requires Mg(2+) as cofactor.

It carries out the reaction ssDNA + n NTP = ssDNA/pppN(pN)n-1 hybrid + (n-1) diphosphate.. In terms of biological role, RNA polymerase that catalyzes the synthesis of short RNA molecules used as primers for DNA polymerase during DNA replication. In Rickettsia felis (strain ATCC VR-1525 / URRWXCal2) (Rickettsia azadi), this protein is DNA primase.